The sequence spans 346 residues: Ly6/PLAUR domain-containing protein 3 (346 aa).

The N-terminal stretch at 1–30 is a signal peptide; that stretch reads MDPARKAGAQAMIWTAGWLLLLLLRGGAQA. 2 UPAR/Ly6 domains span residues 33–126 and 140–222; these read CYSC…ALDP and CYSC…SRCN. 4 N-linked (GlcNAc...) asparagine glycosylation sites follow: asparagine 118, asparagine 163, asparagine 176, and asparagine 183. Positions 233-324 are disordered; the sequence is PRIPPLVRLP…KGGPQQPHNK (92 aa). A compositionally biased stretch (pro residues) spans 234–246; sequence RIPPLVRLPPPEP. Positions 247–269 are enriched in low complexity; it reads TTVASTTSVTTSTSAPVRPTSTT. Residues 283–295 are compositionally biased toward basic and acidic residues; it reads GVEHEASRDEEPR. Cysteine 326 is lipidated: GPI-anchor amidated cysteine. The propeptide at 327-346 is removed in mature form; the sequence is VAPTAGLAALLLAVAAGVLL.

As to quaternary structure, binds laminin-1 and laminin-5. Interacts with LGALS3. Interacts with AGR2 and AGR3. Post-translationally, N-glycosylated and O-glycosylated. As to expression, expressed in placenta, skin and urothelium. Found in suprabasal keratinocytes of chronic wounds. Weak expression is found in esophagus and peripheral blood mononuclear cells. Found in the majority of primary and metastatic transitional cell carcinomas (TCCs) and as well in breast cancer tissues, but not in adjacent normal tissues. High expression is found in the tumor component of some noninvasive superficial lesions and in invasive and metastatic urothelial cancers.

Its subcellular location is the cell membrane. Supports cell migration. May be involved in urothelial cell-matrix interactions. May be involved in tumor progression. This chain is Ly6/PLAUR domain-containing protein 3 (LYPD3), found in Homo sapiens (Human).